The following is a 361-amino-acid chain: Phosphoserine aminotransferase (361 aa).

Arginine 42 contributes to the L-glutamate binding site. Residues 76-77, tryptophan 102, threonine 152, aspartate 172, and glutamine 195 each bind pyridoxal 5'-phosphate; that span reads AT. Lysine 196 bears the N6-(pyridoxal phosphate)lysine mark. 237-238 serves as a coordination point for pyridoxal 5'-phosphate; that stretch reads NT.

This sequence belongs to the class-V pyridoxal-phosphate-dependent aminotransferase family. SerC subfamily. In terms of assembly, homodimer. It depends on pyridoxal 5'-phosphate as a cofactor.

It is found in the cytoplasm. It catalyses the reaction O-phospho-L-serine + 2-oxoglutarate = 3-phosphooxypyruvate + L-glutamate. It carries out the reaction 4-(phosphooxy)-L-threonine + 2-oxoglutarate = (R)-3-hydroxy-2-oxo-4-phosphooxybutanoate + L-glutamate. It functions in the pathway amino-acid biosynthesis; L-serine biosynthesis; L-serine from 3-phospho-D-glycerate: step 2/3. The protein operates within cofactor biosynthesis; pyridoxine 5'-phosphate biosynthesis; pyridoxine 5'-phosphate from D-erythrose 4-phosphate: step 3/5. In terms of biological role, catalyzes the reversible conversion of 3-phosphohydroxypyruvate to phosphoserine and of 3-hydroxy-2-oxo-4-phosphonooxybutanoate to phosphohydroxythreonine. This is Phosphoserine aminotransferase from Xanthomonas campestris pv. campestris (strain 8004).